Reading from the N-terminus, the 319-residue chain is Cytochrome c biogenesis protein CcsA (319 aa).

7 helical membrane passes run 9 to 29 (ILTH…LITL), 44 to 64 (GVIG…AYSG), 71 to 91 (LYES…FPYF), 143 to 163 (MVLG…LLVI), 225 to 245 (IISL…VWAN), 259 to 273 (TWAF…IYLH), and 286 to 306 (AIVA…VNLL).

This sequence belongs to the CcmF/CycK/Ccl1/NrfE/CcsA family. As to quaternary structure, may interact with Ccs1.

The protein localises to the plastid. It is found in the chloroplast thylakoid membrane. Its function is as follows. Required during biogenesis of c-type cytochromes (cytochrome c6 and cytochrome f) at the step of heme attachment. The protein is Cytochrome c biogenesis protein CcsA of Oenothera glazioviana (Large-flowered evening primrose).